A 209-amino-acid chain; its full sequence is Glutathione S-transferase 1, isoform D (209 aa).

The 80-residue stretch at methionine 1–aspartate 80 folds into the GST N-terminal domain. Residues serine 9, histidine 50–isoleucine 52, and glutamate 64–arginine 66 contribute to the glutathione site. One can recognise a GST C-terminal domain in the interval aspartate 86–phenylalanine 207.

It belongs to the GST superfamily. Theta family. In terms of assembly, homodimer.

It carries out the reaction RX + glutathione = an S-substituted glutathione + a halide anion + H(+). The enzyme catalyses 1,1,1-trichloro-2,2-bis(4-chlorophenyl)ethane = 1,1-dichloro-2,2-bis(4-chlorophenyl)ethylene + chloride + H(+). With respect to regulation, inhibited by S-hexylglutathione. Its function is as follows. Conjugation of reduced glutathione to a wide number of exogenous and endogenous hydrophobic electrophiles. Has DDT dehydrochlorinase activity. This Anopheles gambiae (African malaria mosquito) protein is Glutathione S-transferase 1, isoform D (GstD1).